Here is a 131-residue protein sequence, read N- to C-terminus: Transcription antitermination protein NusB (131 aa).

Belongs to the NusB family.

In terms of biological role, involved in transcription antitermination. Required for transcription of ribosomal RNA (rRNA) genes. Binds specifically to the boxA antiterminator sequence of the ribosomal RNA (rrn) operons. In Caldicellulosiruptor saccharolyticus (strain ATCC 43494 / DSM 8903 / Tp8T 6331), this protein is Transcription antitermination protein NusB.